The chain runs to 91 residues: Cytochrome b-c1 complex subunit 6, mitochondrial (91 aa).

Residues 1-13 (MGLEDEQKMLTES) constitute a mitochondrion transit peptide. The disordered stretch occupies residues 1-30 (MGLEDEQKMLTESGDPEEEEEEEEELVDPL). Acidic residues predominate over residues 14-27 (GDPEEEEEEEEELV). Disulfide bonds link C37-C81 and C53-C67. At K42 the chain carries N6-acetyllysine. K85 carries the N6-acetyllysine modification.

This sequence belongs to the UQCRH/QCR6 family. As to quaternary structure, component of the ubiquinol-cytochrome c oxidoreductase (cytochrome b-c1 complex, complex III, CIII), a multisubunit enzyme composed of 11 subunits. The complex is composed of 3 respiratory subunits cytochrome b, cytochrome c1 and Rieske protein UQCRFS1, 2 core protein subunits UQCRC1/QCR1 and UQCRC2/QCR2, and 6 low-molecular weight protein subunits UQCRH/QCR6, UQCRB/QCR7, UQCRQ/QCR8, UQCR10/QCR9, UQCR11/QCR10 and subunit 9, the cleavage product of Rieske protein UQCRFS1. The complex exists as an obligatory dimer and forms supercomplexes (SCs) in the inner mitochondrial membrane with NADH-ubiquinone oxidoreductase (complex I, CI) and cytochrome c oxidase (complex IV, CIV), resulting in different assemblies (supercomplex SCI(1)III(2)IV(1) and megacomplex MCI(2)III(2)IV(2)).

It localises to the mitochondrion inner membrane. Functionally, component of the ubiquinol-cytochrome c oxidoreductase, a multisubunit transmembrane complex that is part of the mitochondrial electron transport chain which drives oxidative phosphorylation. The respiratory chain contains 3 multisubunit complexes succinate dehydrogenase (complex II, CII), ubiquinol-cytochrome c oxidoreductase (cytochrome b-c1 complex, complex III, CIII) and cytochrome c oxidase (complex IV, CIV), that cooperate to transfer electrons derived from NADH and succinate to molecular oxygen, creating an electrochemical gradient over the inner membrane that drives transmembrane transport and the ATP synthase. The cytochrome b-c1 complex catalyzes electron transfer from ubiquinol to cytochrome c, linking this redox reaction to translocation of protons across the mitochondrial inner membrane, with protons being carried across the membrane as hydrogens on the quinol. In the process called Q cycle, 2 protons are consumed from the matrix, 4 protons are released into the intermembrane space and 2 electrons are passed to cytochrome c. The sequence is that of Cytochrome b-c1 complex subunit 6, mitochondrial (UQCRH) from Homo sapiens (Human).